A 403-amino-acid polypeptide reads, in one-letter code: uncharacterized protein (403 aa).

This is an uncharacterized protein from Aquifex aeolicus (strain VF5).